Reading from the N-terminus, the 359-residue chain is Small ribosomal subunit protein mS22 (359 aa).

Residues 40 to 65 (RPQPFEVGQPRRLLSSEAESGSSEVK) form a disordered region. S54 carries the post-translational modification Phosphoserine. K210 bears the N6-acetyllysine mark.

This sequence belongs to the mitochondrion-specific ribosomal protein mS22 family. In terms of assembly, component of the mitochondrial ribosome small subunit (28S) which comprises a 12S rRNA and about 30 distinct proteins.

Its subcellular location is the mitochondrion. This chain is Small ribosomal subunit protein mS22 (Mrps22), found in Mus musculus (Mouse).